The sequence spans 294 residues: Probable endonuclease 4 (294 aa).

Zn(2+)-binding residues include histidine 71, histidine 111, glutamate 148, aspartate 182, histidine 185, histidine 217, aspartate 230, histidine 232, and glutamate 262.

This sequence belongs to the AP endonuclease 2 family. Zn(2+) is required as a cofactor.

The enzyme catalyses Endonucleolytic cleavage to 5'-phosphooligonucleotide end-products.. Functionally, endonuclease IV plays a role in DNA repair. It cleaves phosphodiester bonds at apurinic or apyrimidinic (AP) sites, generating a 3'-hydroxyl group and a 5'-terminal sugar phosphate. In Acholeplasma laidlawii (strain PG-8A), this protein is Probable endonuclease 4.